The chain runs to 158 residues: Cyclic pyranopterin monophosphate synthase (158 aa).

Residues 74–76 and 112–113 each bind substrate; these read MCH and ME. D127 is an active-site residue.

Belongs to the MoaC family. As to quaternary structure, homohexamer; trimer of dimers.

It carries out the reaction (8S)-3',8-cyclo-7,8-dihydroguanosine 5'-triphosphate = cyclic pyranopterin phosphate + diphosphate. It functions in the pathway cofactor biosynthesis; molybdopterin biosynthesis. In terms of biological role, catalyzes the conversion of (8S)-3',8-cyclo-7,8-dihydroguanosine 5'-triphosphate to cyclic pyranopterin monophosphate (cPMP). The polypeptide is Cyclic pyranopterin monophosphate synthase (Helicobacter pylori (strain G27)).